A 625-amino-acid polypeptide reads, in one-letter code: Chaperone protein HtpG (625 aa).

Residues 1–341 (MGKRKFKAES…SEDLSLNISR (341 aa)) are a; substrate-binding. The tract at residues 342-551 (EMLQHDRQLK…DGEISLEMEK (210 aa)) is b. Residues 552–625 (IINAMPDDQQ…FTNDICKVMV (74 aa)) form a c region.

It belongs to the heat shock protein 90 family. As to quaternary structure, homodimer.

It is found in the cytoplasm. Its function is as follows. Molecular chaperone. Has ATPase activity. The polypeptide is Chaperone protein HtpG (Oceanobacillus iheyensis (strain DSM 14371 / CIP 107618 / JCM 11309 / KCTC 3954 / HTE831)).